We begin with the raw amino-acid sequence, 209 residues long: Uracil phosphoribosyltransferase (209 aa).

Residues Arg-78, Arg-103, and 130–138 contribute to the 5-phospho-alpha-D-ribose 1-diphosphate site; that span reads DPMFATGGT. Uracil is bound by residues Ile-193 and 198–200; that span reads GDA. Asp-199 is a 5-phospho-alpha-D-ribose 1-diphosphate binding site.

The protein belongs to the UPRTase family. The cofactor is Mg(2+).

The catalysed reaction is UMP + diphosphate = 5-phospho-alpha-D-ribose 1-diphosphate + uracil. Its pathway is pyrimidine metabolism; UMP biosynthesis via salvage pathway; UMP from uracil: step 1/1. Its activity is regulated as follows. Allosterically activated by GTP. In terms of biological role, catalyzes the conversion of uracil and 5-phospho-alpha-D-ribose 1-diphosphate (PRPP) to UMP and diphosphate. The chain is Uracil phosphoribosyltransferase from Campylobacter fetus subsp. fetus (strain 82-40).